We begin with the raw amino-acid sequence, 255 residues long: Ribosomal RNA small subunit methyltransferase A (255 aa).

Residues asparagine 12, leucine 14, glycine 39, glutamate 60, aspartate 84, and asparagine 106 each contribute to the S-adenosyl-L-methionine site.

This sequence belongs to the class I-like SAM-binding methyltransferase superfamily. rRNA adenine N(6)-methyltransferase family. RsmA subfamily.

It localises to the cytoplasm. The enzyme catalyses adenosine(1518)/adenosine(1519) in 16S rRNA + 4 S-adenosyl-L-methionine = N(6)-dimethyladenosine(1518)/N(6)-dimethyladenosine(1519) in 16S rRNA + 4 S-adenosyl-L-homocysteine + 4 H(+). Functionally, specifically dimethylates two adjacent adenosines (A1518 and A1519) in the loop of a conserved hairpin near the 3'-end of 16S rRNA in the 30S particle. May play a critical role in biogenesis of 30S subunits. This is Ribosomal RNA small subunit methyltransferase A from Herminiimonas arsenicoxydans.